Reading from the N-terminus, the 148-residue chain is UPF0756 membrane protein YeaL (148 aa).

4 consecutive transmembrane segments (helical) span residues 14–34 (ALGFISHNTTVAVSILVLIIV), 51–71 (LSIGIIILTIGVMAPIASGTL), 86–106 (LVAIAVGVIVSWLGGRGVTLM), and 121–141 (VLGVALFRGVPVGPLIAAGLV).

The protein belongs to the UPF0756 family.

The protein localises to the cell membrane. The sequence is that of UPF0756 membrane protein YeaL from Shigella boydii serotype 18 (strain CDC 3083-94 / BS512).